Reading from the N-terminus, the 132-residue chain is Fatty acid-binding protein, adipocyte (132 aa).

The residue at position 2 (cysteine 2) is an N-acetylcysteine. Serine 13 carries the phosphoserine modification. Residue tyrosine 20 is modified to Phosphotyrosine; by Tyr-kinases. The Nuclear localization signal motif lies at 22 to 32; sequence KEVGVGFATRK. 127–129 lines the a fatty acid pocket; the sequence is RVY.

Belongs to the calycin superfamily. Fatty-acid binding protein (FABP) family. As to quaternary structure, monomer. Homodimer. Interacts with PPARG.

It localises to the cytoplasm. The protein resides in the nucleus. Its function is as follows. Lipid transport protein in adipocytes. Binds both long chain fatty acids and retinoic acid. Delivers long-chain fatty acids and retinoic acid to their cognate receptors in the nucleus. FABPs are important elements related to the hibernating state in mammals. This Ictidomys tridecemlineatus (Thirteen-lined ground squirrel) protein is Fatty acid-binding protein, adipocyte (FABP4).